The chain runs to 153 residues: Transcriptional repressor NrdR (153 aa).

Residues 3–34 (CPYCNADDTKVIDSRLAAEGAQVRRRRQCNQC) fold into a zinc finger. An ATP-cone domain is found at 49–139 (PRIIKSNGRI…VYRDFQDIEA (91 aa)).

The protein belongs to the NrdR family. It depends on Zn(2+) as a cofactor.

In terms of biological role, negatively regulates transcription of bacterial ribonucleotide reductase nrd genes and operons by binding to NrdR-boxes. The polypeptide is Transcriptional repressor NrdR (Psychrobacter sp. (strain PRwf-1)).